The chain runs to 193 residues: Ancillary SecYEG translocon subunit (193 aa).

The Cytoplasmic portion of the chain corresponds to 1-8; that stretch reads MLNISKKN. Residues 9–29 form a helical membrane-spanning segment; it reads IIFFILFFLIISLILFNWKYF. At 30–193 the chain is on the periplasmic side; sequence SLVNKENLES…MKLNELKEQN (164 aa).

The protein belongs to the YfgM family. In terms of assembly, interacts with the SecYEG translocon. Forms a complex with PpiD.

Its subcellular location is the cell inner membrane. Its function is as follows. May mediate protein transfer from the SecYEG translocon to the periplasmic chaperone network via its periplasmic C-terminal region. In Buchnera aphidicola subsp. Acyrthosiphon pisum (strain APS) (Acyrthosiphon pisum symbiotic bacterium), this protein is Ancillary SecYEG translocon subunit.